A 199-amino-acid polypeptide reads, in one-letter code: 3-isopropylmalate dehydratase small subunit (199 aa).

The protein belongs to the LeuD family. LeuD type 1 subfamily. Heterodimer of LeuC and LeuD.

It catalyses the reaction (2R,3S)-3-isopropylmalate = (2S)-2-isopropylmalate. It functions in the pathway amino-acid biosynthesis; L-leucine biosynthesis; L-leucine from 3-methyl-2-oxobutanoate: step 2/4. Its function is as follows. Catalyzes the isomerization between 2-isopropylmalate and 3-isopropylmalate, via the formation of 2-isopropylmaleate. The protein is 3-isopropylmalate dehydratase small subunit of Bacillus licheniformis (strain ATCC 14580 / DSM 13 / JCM 2505 / CCUG 7422 / NBRC 12200 / NCIMB 9375 / NCTC 10341 / NRRL NRS-1264 / Gibson 46).